A 379-amino-acid polypeptide reads, in one-letter code: Sulfate adenylyltransferase (379 aa).

Belongs to the sulfate adenylyltransferase family.

The enzyme catalyses sulfate + ATP + H(+) = adenosine 5'-phosphosulfate + diphosphate. It functions in the pathway sulfur metabolism; hydrogen sulfide biosynthesis; sulfite from sulfate: step 1/3. The chain is Sulfate adenylyltransferase (sat) from Pyrococcus abyssi (strain GE5 / Orsay).